Consider the following 85-residue polypeptide: UPF0386 protein Meso_1721 (85 aa).

The protein belongs to the UPF0386 family.

The polypeptide is UPF0386 protein Meso_1721 (Chelativorans sp. (strain BNC1)).